A 129-amino-acid polypeptide reads, in one-letter code: M-zodatoxin-Lt8f (129 aa).

The N-terminal stretch at 1–20 (MKYFVVALALVAAFACIAES) is a signal peptide. Residues 21–60 (KPAESEHELAEVEEENELADLEDAVWLEHLADLSDLEEAR) constitute a propeptide that is removed on maturation. The short motif at 57-60 (EEAR) is the Processing quadruplet motif element.

In terms of processing, cleavage of the propeptide depends on the processing quadruplet motif (XXXR, with at least one of X being E). As to expression, expressed by the venom gland.

It is found in the secreted. Insecticidal, cytolytic and antimicrobial peptide. Has insecticidal activity against the flesh fly S.carnaria. Has antibacterial activity against the Gram-negative bacteria E.coli. Forms voltage-dependent, ion-permeable channels in membranes. At high concentration causes cell membrane lysis. This Lachesana tarabaevi (Spider) protein is M-zodatoxin-Lt8f (cit 1-7).